A 473-amino-acid polypeptide reads, in one-letter code: Putative malate dehydrogenase 1B (473 aa).

It belongs to the LDH/MDH superfamily. MDH type 2 family.

The protein is Putative malate dehydrogenase 1B (MDH1B) of Bos taurus (Bovine).